The following is a 512-amino-acid chain: Cytochrome P450 26B1 (512 aa).

A heme-binding site is contributed by cysteine 441.

The protein belongs to the cytochrome P450 family. Heme serves as cofactor.

Its subcellular location is the endoplasmic reticulum membrane. It is found in the microsome membrane. The enzyme catalyses all-trans-retinoate + reduced [NADPH--hemoprotein reductase] + O2 = all-trans-4-hydroxyretinoate + oxidized [NADPH--hemoprotein reductase] + H2O + H(+). It carries out the reaction all-trans-retinoate + reduced [NADPH--hemoprotein reductase] + O2 = all-trans-18-hydroxyretinoate + oxidized [NADPH--hemoprotein reductase] + H2O + H(+). A cytochrome P450 monooxygenase involved in the metabolism of retinoates (RAs), the active metabolites of vitamin A, and critical signaling molecules in animals. RAs exist as at least four different isomers: all-trans-RA (atRA), 9-cis-RA, 13-cis-RA, and 9,13-dicis-RA, where atRA is considered to be the biologically active isomer, although 9-cis-RA and 13-cis-RA also have activity. Catalyzes the hydroxylation of atRA primarily at C-4 and C-18, thereby contributing to the regulation of atRA homeostasis and signaling. Hydroxylation of atRA limits its biological activity and initiates a degradative process leading to its eventual elimination. Involved in the convertion of atRA to all-trans-4-oxo-RA. Can oxidize all-trans-13,14-dihydroretinoate (DRA) to metabolites which could include all-trans-4-oxo-DRA, all-trans-4-hydroxy-DRA, all-trans-5,8-epoxy-DRA, and all-trans-18-hydroxy-DRA. Shows preference for the following substrates: atRA &gt; 9-cis-RA &gt; 13-cis-RA. Plays a central role in germ cell development: acts by degrading RAs in the developing testis, preventing STRA8 expression, thereby leading to delay of meiosis. Required for the maintenance of the undifferentiated state of male germ cells during embryonic development in Sertoli cells, inducing arrest in G0 phase of the cell cycle and preventing meiotic entry. Plays a role in skeletal development, both at the level of patterning and in the ossification of bone and the establishment of some synovial joints. Essential for postnatal survival. In terms of biological role, also has a significant activity in oxidation of tazarotenic acid and may therefore metabolize that xenobiotic in vivo. The protein is Cytochrome P450 26B1 (CYP26B1) of Bos taurus (Bovine).